The primary structure comprises 181 residues: uncharacterized protein (181 aa).

Residues 1-19 (MRRLLACSAGVLCFSQLGA) form the signal peptide.

This is an uncharacterized protein from Treponema pallidum (strain Nichols).